Here is a 259-residue protein sequence, read N- to C-terminus: Short-chain dehydrogenase chry4 (259 aa).

Residues Arg37, Asp55, Asn81, Tyr154, Lys158, Val185, and Thr187 each contribute to the NADP(+) site. Catalysis depends on Tyr154, which acts as the Proton donor. The Lowers pKa of active site Tyr role is filled by Lys158.

Belongs to the short-chain dehydrogenases/reductases (SDR) family.

The protein operates within pigment biosynthesis. Functionally, short-chain dehydrogenase; part of the gene cluster that mediates the biosynthesis of the yellow pigment chrysogine. Pyruvic acid and anthranilic acid are likely substrates for the nonribosomal peptide synthetase chry1/NRPS14, with pyruvic acid adenylated by the first A domain and anthranilic acid by the second. If pyruvic acid and anthranilic acid are merged and released from chry1/NRPS14 by hydrolysis, a subsequent amidation would lead to 2-pyruvoylaminobenzamide. This process is probably catalyzed by the amidotransferase chry2 using glutamine as amino donor. The dehydrogenase chry5 that has a terminal berberine bridge domain for C-N cyclization could catalyze the cyclization of 2-pyruvoylaminobenzamide to yield acetyl-4(3H)-quinazolidinone. A final reduction of acetyl-4(3H)-quinazolidinone catalyzed by the oxidoreductase chry4 would result in chrysogine. The polypeptide is Short-chain dehydrogenase chry4 (Gibberella zeae (strain ATCC MYA-4620 / CBS 123657 / FGSC 9075 / NRRL 31084 / PH-1) (Wheat head blight fungus)).